A 524-amino-acid chain; its full sequence is D-3-phosphoglycerate dehydrogenase (524 aa).

NAD(+) contacts are provided by residues 149–150 (RI), Asp169, 229–231 (CAR), and Asp255. Arg231 is a catalytic residue. Glu260 is a catalytic residue. Catalysis depends on His278, which acts as the Proton donor. 278–281 (HQGA) is a binding site for NAD(+). In terms of domain architecture, ACT spans 452-524 (LAIIKHIDRP…NIKDVAVINL (73 aa)).

Belongs to the D-isomer specific 2-hydroxyacid dehydrogenase family.

It carries out the reaction (2R)-3-phosphoglycerate + NAD(+) = 3-phosphooxypyruvate + NADH + H(+). Its pathway is amino-acid biosynthesis; L-serine biosynthesis; L-serine from 3-phospho-D-glycerate: step 1/3. The sequence is that of D-3-phosphoglycerate dehydrogenase (serA) from Methanocaldococcus jannaschii (strain ATCC 43067 / DSM 2661 / JAL-1 / JCM 10045 / NBRC 100440) (Methanococcus jannaschii).